Reading from the N-terminus, the 182-residue chain is UPF0316 protein Sde_0566 (182 aa).

3 helical membrane passes run 7–27 (VAPE…VSLG), 41–61 (LAAF…GQVF), and 67–87 (WYLA…GMWI).

It belongs to the UPF0316 family.

Its subcellular location is the cell membrane. This is UPF0316 protein Sde_0566 from Saccharophagus degradans (strain 2-40 / ATCC 43961 / DSM 17024).